We begin with the raw amino-acid sequence, 203 residues long: Small ribosomal subunit protein uS4c (203 aa).

The region spanning 91–159 is the S4 RNA-binding domain; the sequence is MRLDNIIFRL…ISKNIEFYQK (69 aa).

Belongs to the universal ribosomal protein uS4 family. In terms of assembly, part of the 30S ribosomal subunit. Contacts protein S5. The interaction surface between S4 and S5 is involved in control of translational fidelity.

It localises to the plastid. The protein localises to the chloroplast. In terms of biological role, one of the primary rRNA binding proteins, it binds directly to 16S rRNA where it nucleates assembly of the body of the 30S subunit. Functionally, with S5 and S12 plays an important role in translational accuracy. In Lopidium concinnum (Moss), this protein is Small ribosomal subunit protein uS4c (rps4).